The primary structure comprises 65 residues: Cytochrome b-c1 complex subunit 9, mitochondrial (65 aa).

A helical membrane pass occupies residues 14–34 (IYVATIFGGAFAFQGFFDVAV).

This sequence belongs to the UQCR10/QCR9 family. Component of the ubiquinol-cytochrome c oxidoreductase (cytochrome b-c1 complex, complex III, CIII), a multisubunit enzyme composed of 10 subunits. The complex is composed of 3 respiratory subunits cytochrome b (COB), cytochrome c1 (CYT1) and Rieske protein (RIP1), 2 core protein subunits COR1 and QCR2, and 5 low-molecular weight protein subunits QCR6, QCR7, QCR8, QCR9 and QCR10. The complex exists as an obligatory dimer and forms supercomplexes (SCs) in the inner mitochondrial membrane with a monomer or a dimer of cytochrome c oxidase (complex IV, CIV), resulting in 2 different assemblies (supercomplexes III(2)IV and III(2)IV(2)).

Its subcellular location is the membrane. It localises to the mitochondrion inner membrane. Its function is as follows. Component of the ubiquinol-cytochrome c oxidoreductase, a multisubunit transmembrane complex that is part of the mitochondrial electron transport chain which drives oxidative phosphorylation. The complex plays an important role in the uptake of multiple carbon sources present in different host niches. This chain is Cytochrome b-c1 complex subunit 9, mitochondrial, found in Candida albicans (strain SC5314 / ATCC MYA-2876) (Yeast).